The chain runs to 274 residues: Kit ligand (274 aa).

The signal sequence occupies residues Met1–Thr25. At Lys26–Gln215 the chain is on the extracellular side. Intrachain disulfides connect Cys29–Cys114 and Cys68–Cys164. Asn90, Asn97, Asn145, and Asn196 each carry an N-linked (GlcNAc...) asparagine glycan. Residues Trp216–Trp238 form a helical membrane-spanning segment. Over Lys239–Val274 the chain is Cytoplasmic.

This sequence belongs to the SCF family. As to quaternary structure, homodimer, non-covalently linked. Heterotetramer with KIT, binding two KIT molecules; thereby mediates KIT dimerization and subsequent activation by autophosphorylation. A soluble form is produced by proteolytic processing of isoform 1 in the extracellular domain.

It localises to the cytoplasm. It is found in the cytoskeleton. The protein resides in the cell membrane. The protein localises to the cell projection. Its subcellular location is the lamellipodium. It localises to the filopodium. It is found in the secreted. Its function is as follows. Ligand for the receptor-type protein-tyrosine kinase KIT. Plays an essential role in the regulation of cell survival and proliferation, hematopoiesis, stem cell maintenance, gametogenesis, mast cell development, migration and function, and in melanogenesis. KITLG/SCF binding can activate several signaling pathways. Promotes phosphorylation of PIK3R1, the regulatory subunit of phosphatidylinositol 3-kinase, and subsequent activation of the kinase AKT1. KITLG/SCF and KIT also transmit signals via GRB2 and activation of RAS, RAF1 and the MAP kinases MAPK1/ERK2 and/or MAPK3/ERK1. KITLG/SCF and KIT promote activation of STAT family members STAT1, STAT3 and STAT5. KITLG/SCF and KIT promote activation of PLCG1, leading to the production of the cellular signaling molecules diacylglycerol and inositol 1,4,5-trisphosphate. KITLG/SCF acts synergistically with other cytokines, probably interleukins. This Neovison vison (American mink) protein is Kit ligand (KITLG).